Consider the following 128-residue polypeptide: Sulfurtransferase TusD (128 aa).

C78 acts as the Cysteine persulfide intermediate in catalysis.

This sequence belongs to the DsrE/TusD family. In terms of assembly, heterohexamer, formed by a dimer of trimers. The hexameric TusBCD complex contains 2 copies each of TusB, TusC and TusD. The TusBCD complex interacts with TusE.

Its subcellular location is the cytoplasm. Its function is as follows. Part of a sulfur-relay system required for 2-thiolation of 5-methylaminomethyl-2-thiouridine (mnm(5)s(2)U) at tRNA wobble positions. Accepts sulfur from TusA and transfers it in turn to TusE. This is Sulfurtransferase TusD from Salmonella arizonae (strain ATCC BAA-731 / CDC346-86 / RSK2980).